A 151-amino-acid polypeptide reads, in one-letter code: uncharacterized protein (151 aa).

This is an uncharacterized protein from Aquifex aeolicus (strain VF5).